Here is a 187-residue protein sequence, read N- to C-terminus: UPF0301 protein YqgE (187 aa).

This sequence belongs to the UPF0301 (AlgH) family.

This is UPF0301 protein YqgE from Salmonella agona (strain SL483).